Here is a 279-residue protein sequence, read N- to C-terminus: Thymidylate synthase (279 aa).

133 to 134 (RR) serves as a coordination point for dUMP. The Nucleophile role is filled by C154. DUMP-binding positions include 178-181 (RSND), N189, and 219-221 (HIY). D181 serves as a coordination point for (6R)-5,10-methylene-5,6,7,8-tetrahydrofolate. A278 is a (6R)-5,10-methylene-5,6,7,8-tetrahydrofolate binding site.

The protein belongs to the thymidylate synthase family. Bacterial-type ThyA subfamily. Homodimer.

It is found in the cytoplasm. The enzyme catalyses dUMP + (6R)-5,10-methylene-5,6,7,8-tetrahydrofolate = 7,8-dihydrofolate + dTMP. Its pathway is pyrimidine metabolism; dTTP biosynthesis. Functionally, catalyzes the reductive methylation of 2'-deoxyuridine-5'-monophosphate (dUMP) to 2'-deoxythymidine-5'-monophosphate (dTMP) while utilizing 5,10-methylenetetrahydrofolate (mTHF) as the methyl donor and reductant in the reaction, yielding dihydrofolate (DHF) as a by-product. This enzymatic reaction provides an intracellular de novo source of dTMP, an essential precursor for DNA biosynthesis. In Streptococcus pyogenes serotype M12 (strain MGAS2096), this protein is Thymidylate synthase.